The following is a 301-amino-acid chain: Phosducin-like protein (301 aa).

Position 2 is an N-acetylthreonine (Thr-2). Residues 15-60 (YYYSTSEDEDSDHEDKDRGRGAPASSSTPAEAELAGEGISVNTGPK) form a disordered region. Residues Ser-20 and Ser-25 each carry the phosphoserine modification. Over residues 36–49 (APASSSTPAEAELA) the composition is skewed to low complexity. A Phosducin domain is found at 36-299 (APASSSTPAE…TCHSEDSDLE (264 aa)). The segment at 158–301 (FKQVLEIPSG…HSEDSDLEID (144 aa)) is thioredoxin fold. Phosphoserine is present on residues Ser-226, Ser-293, and Ser-296.

Belongs to the phosducin family. As to quaternary structure, interacts with the CCT chaperonin complex. Forms a complex with the beta and gamma subunits of the GTP-binding protein, transducin.

It is found in the cell projection. It localises to the cilium. Functionally, functions as a co-chaperone for CCT in the assembly of heterotrimeric G protein complexes, facilitates the assembly of both Gbeta-Ggamma and RGS-Gbeta5 heterodimers. Also acts as a positive regulator of hedgehog signaling and regulates ciliary function. This is Phosducin-like protein (Pdcl) from Rattus norvegicus (Rat).